The primary structure comprises 121 residues: Large ribosomal subunit protein eL31 (121 aa).

It belongs to the eukaryotic ribosomal protein eL31 family.

The protein is Large ribosomal subunit protein eL31 (RPL31) of Panax ginseng (Korean ginseng).